The primary structure comprises 426 residues: Serine--tRNA ligase (426 aa).

230 to 232 (TSE) is an L-serine binding site. Residue 261-263 (RSE) coordinates ATP. Glutamate 284 contacts L-serine. 348 to 351 (EISS) lines the ATP pocket. Serine 384 contributes to the L-serine binding site.

The protein belongs to the class-II aminoacyl-tRNA synthetase family. Type-1 seryl-tRNA synthetase subfamily. As to quaternary structure, homodimer. The tRNA molecule binds across the dimer.

It is found in the cytoplasm. The catalysed reaction is tRNA(Ser) + L-serine + ATP = L-seryl-tRNA(Ser) + AMP + diphosphate + H(+). It catalyses the reaction tRNA(Sec) + L-serine + ATP = L-seryl-tRNA(Sec) + AMP + diphosphate + H(+). It functions in the pathway aminoacyl-tRNA biosynthesis; selenocysteinyl-tRNA(Sec) biosynthesis; L-seryl-tRNA(Sec) from L-serine and tRNA(Sec): step 1/1. In terms of biological role, catalyzes the attachment of serine to tRNA(Ser). Is also able to aminoacylate tRNA(Sec) with serine, to form the misacylated tRNA L-seryl-tRNA(Sec), which will be further converted into selenocysteinyl-tRNA(Sec). In Sphingopyxis alaskensis (strain DSM 13593 / LMG 18877 / RB2256) (Sphingomonas alaskensis), this protein is Serine--tRNA ligase.